We begin with the raw amino-acid sequence, 382 residues long: Alkanesulfonate monooxygenase (382 aa).

This sequence belongs to the SsuD family. Homotetramer.

It catalyses the reaction an alkanesulfonate + FMNH2 + O2 = an aldehyde + FMN + sulfite + H2O + 2 H(+). Its function is as follows. Catalyzes the desulfonation of aliphatic sulfonates. The sequence is that of Alkanesulfonate monooxygenase from Yersinia pseudotuberculosis serotype IB (strain PB1/+).